The primary structure comprises 369 residues: MSKDYFIGLMSGTSMDGVDAVLVQFSQGEATLVERHSQAIPKHTLSGLQRLCLPGSDEITRLGQLDRSVGLLFASAVNALLEKAGVSKEQVVAIGSHGQTVRHMPNLDMGFTLQIGDPNTIAVETGIDVIADFRRKDIALGGQGAPLVPAFHQQMFSKPDTNRIILNIGGISNVTYLPGNSQAVVGFDTGPGNTLIDAWIQQVKHEAYDKDGAWAASGETDEKLLMYLLSHSYFSMGFPKSTGRELFNQAWLEQQTAAFGHLSEADIQSTLLDVTCHSIAKDVLTLSADGELFVCGGGAFNRELMSRLHNLLPSYQIDSTASLGMNPQWVEGIAFAWLAMRHNQGLSGNLPAVTGASREAVLGSLFPAA.

Position 12 to 19 (12 to 19) interacts with ATP; the sequence is GTSMDGVD.

Belongs to the anhydro-N-acetylmuramic acid kinase family.

It catalyses the reaction 1,6-anhydro-N-acetyl-beta-muramate + ATP + H2O = N-acetyl-D-muramate 6-phosphate + ADP + H(+). Its pathway is amino-sugar metabolism; 1,6-anhydro-N-acetylmuramate degradation. The protein operates within cell wall biogenesis; peptidoglycan recycling. In terms of biological role, catalyzes the specific phosphorylation of 1,6-anhydro-N-acetylmuramic acid (anhMurNAc) with the simultaneous cleavage of the 1,6-anhydro ring, generating MurNAc-6-P. Is required for the utilization of anhMurNAc either imported from the medium or derived from its own cell wall murein, and thus plays a role in cell wall recycling. In Shewanella woodyi (strain ATCC 51908 / MS32), this protein is Anhydro-N-acetylmuramic acid kinase.